Consider the following 552-residue polypeptide: Glutamine--tRNA ligase (552 aa).

The 'HIGH' region signature appears at 33–43; sequence PEPNGYLHIGH. ATP is bound by residues 34 to 36 and 40 to 46; these read EPN and HIGHAKS. 2 residues coordinate L-glutamine: Asp-66 and Tyr-210. ATP is bound by residues Thr-229, 259-260, and 267-269; these read RL and MSK. A 'KMSKS' region motif is present at residues 266 to 270; sequence VMSKR.

The protein belongs to the class-I aminoacyl-tRNA synthetase family. Monomer.

Its subcellular location is the cytoplasm. It catalyses the reaction tRNA(Gln) + L-glutamine + ATP = L-glutaminyl-tRNA(Gln) + AMP + diphosphate. In Clostridium perfringens (strain ATCC 13124 / DSM 756 / JCM 1290 / NCIMB 6125 / NCTC 8237 / Type A), this protein is Glutamine--tRNA ligase.